The following is a 336-amino-acid chain: Torsin-1B (336 aa).

Positions 1–24 (MRRIGAFGGSTALWALLAAHVAGA) are cleaved as a signal peptide. Asn64 carries an N-linked (GlcNAc...) asparagine glycan. 109–116 (GWAGTGKN) is a binding site for ATP. Asn165 carries N-linked (GlcNAc...) asparagine glycosylation.

It belongs to the ClpA/ClpB family. Torsin subfamily. As to quaternary structure, homohexamer. Interacts with TOR1A; the interaction may be specific of neural tissues. Interacts with TOR1AIP1; TOR1AIP1 is required for TOR1B location on the nuclear membrane. Interacts (ATP-bound) with TOR1AIP2; important for endoplasmic reticulum integrity. N-glycosylated. As to expression, highly expressed in liver and muscle; lower expression levels are observed in brain (at protein level).

It is found in the endoplasmic reticulum lumen. It localises to the nucleus membrane. It catalyses the reaction ATP + H2O = ADP + phosphate + H(+). May serve as a molecular chaperone assisting in the proper folding of secreted and/or membrane proteins. Plays a role in non-neural cells nuclear envelope and endoplasmic reticulum integrity. May have a redundant function with TOR1A in non-neural tissues. The chain is Torsin-1B (Tor1b) from Mus musculus (Mouse).